The primary structure comprises 341 residues: 4-hydroxy-2-oxovalerate aldolase (341 aa).

In terms of domain architecture, Pyruvate carboxyltransferase spans 5 to 257 (ITLHDMTLRD…ETGVDVFRIA (253 aa)). 13–14 (RD) serves as a coordination point for substrate. Mn(2+) is bound at residue D14. The active-site Proton acceptor is H17. Substrate contacts are provided by S167 and H196. Mn(2+)-binding residues include H196 and H198. Y287 is a substrate binding site.

The protein belongs to the 4-hydroxy-2-oxovalerate aldolase family.

The enzyme catalyses (S)-4-hydroxy-2-oxopentanoate = acetaldehyde + pyruvate. In Cupriavidus taiwanensis (strain DSM 17343 / BCRC 17206 / CCUG 44338 / CIP 107171 / LMG 19424 / R1) (Ralstonia taiwanensis (strain LMG 19424)), this protein is 4-hydroxy-2-oxovalerate aldolase (mhpE).